The following is a 241-amino-acid chain: uncharacterized protein (241 aa).

3 disordered regions span residues 19 to 59, 101 to 139, and 152 to 182; these read ERDR…QQLG, VRRP…ASRS, and RGCR…KPCS. Residues 34-48 show a composition bias toward gly residues; it reads ARGGRGLWTVGGGGS. Residues 49 to 58 are compositionally biased toward polar residues; sequence PTETAESQQL. The span at 106–118 shows a compositional bias: pro residues; sequence PSVPSPLPKPPVP.

This is an uncharacterized protein from Homo sapiens (Human).